The chain runs to 293 residues: Diaminopimelate epimerase (293 aa).

Substrate contacts are provided by Asn17, Gln47, and Asn67. Cys76 (proton donor) is an active-site residue. Substrate-binding positions include 77-78, Asn164, Asn197, and 215-216; these read GN and ER. Cys224 functions as the Proton acceptor in the catalytic mechanism. 225 to 226 provides a ligand contact to substrate; that stretch reads GS.

This sequence belongs to the diaminopimelate epimerase family. As to quaternary structure, homodimer.

Its subcellular location is the cytoplasm. It carries out the reaction (2S,6S)-2,6-diaminopimelate = meso-2,6-diaminopimelate. It participates in amino-acid biosynthesis; L-lysine biosynthesis via DAP pathway; DL-2,6-diaminopimelate from LL-2,6-diaminopimelate: step 1/1. Its function is as follows. Catalyzes the stereoinversion of LL-2,6-diaminopimelate (L,L-DAP) to meso-diaminopimelate (meso-DAP), a precursor of L-lysine and an essential component of the bacterial peptidoglycan. This is Diaminopimelate epimerase from Rhodopseudomonas palustris (strain BisB5).